The following is a 206-amino-acid chain: Small ribosomal subunit protein uS4 (206 aa).

An S4 RNA-binding domain is found at 93-153 (TRLDALVLRA…PKSQTMVPFQ (61 aa)).

It belongs to the universal ribosomal protein uS4 family. In terms of assembly, part of the 30S ribosomal subunit. Contacts protein S5. The interaction surface between S4 and S5 is involved in control of translational fidelity.

In terms of biological role, one of the primary rRNA binding proteins, it binds directly to 16S rRNA where it nucleates assembly of the body of the 30S subunit. With S5 and S12 plays an important role in translational accuracy. This chain is Small ribosomal subunit protein uS4, found in Bifidobacterium animalis subsp. lactis (strain AD011).